Consider the following 187-residue polypeptide: Elongation factor P (187 aa).

It belongs to the elongation factor P family.

The protein resides in the cytoplasm. Its pathway is protein biosynthesis; polypeptide chain elongation. In terms of biological role, involved in peptide bond synthesis. Stimulates efficient translation and peptide-bond synthesis on native or reconstituted 70S ribosomes in vitro. Probably functions indirectly by altering the affinity of the ribosome for aminoacyl-tRNA, thus increasing their reactivity as acceptors for peptidyl transferase. This chain is Elongation factor P, found in Rhodococcus opacus (strain B4).